A 323-amino-acid polypeptide reads, in one-letter code: Sporulation-delaying protein SdpB (323 aa).

6 helical membrane-spanning segments follow: residues 27 to 49 (LLGFSTLLVLLFNSTDILFSYSA), 70 to 92 (SINFEIIRYLMIFILTLVVIGWR), 112 to 134 (LTIDGGEQIATVLSFLILPVTLL), 155 to 177 (TVLFYIMTIIKIQVFIIYLNAAL), 219 to 241 (IVVITWLVTIFELFLAASIISNI), and 248 to 270 (LVLGILFHIGIIFSIGIVSFGLI).

It localises to the cell membrane. Functionally, required for the maturation of SdpC to SDP. Not required for SdpC signal peptide cleavage, secretion from the cell or disulfide bond formation. This chain is Sporulation-delaying protein SdpB, found in Bacillus subtilis (strain 168).